The following is a 355-amino-acid chain: Aromatic amino acid aminotransferase (355 aa).

K217 carries the post-translational modification N6-(pyridoxal phosphate)lysine.

Belongs to the class-II pyridoxal-phosphate-dependent aminotransferase family. As to quaternary structure, homodimer. It depends on pyridoxal 5'-phosphate as a cofactor.

It carries out the reaction an aromatic L-alpha-amino acid + 2-oxoglutarate = an aromatic oxo-acid + L-glutamate. In terms of biological role, aminotransferase that catalyzes the conversion of aromatic amino acids and 2-oxoglutarate into corresponding aromatic oxo acids and L-glutamate. In Mycolicibacterium paratuberculosis (strain ATCC BAA-968 / K-10) (Mycobacterium paratuberculosis), this protein is Aromatic amino acid aminotransferase.